A 561-amino-acid polypeptide reads, in one-letter code: MSSPIQPLPLNVINLIAAGEVIDSIAAVVRELVENALDAGATRLVISLFPESWRVQVADNGTGMTLADLRHCALPHSTSKIHQLDDLWKITTLGFRGEALHSLAQVADLEIASRCTSDGVGWCLRYQSSGEPLREEPTAIAPGTIVTVGNLFGKMPVRRQGLPAISTQLKAVQSFIENMALCHPQVTWQVWHNQRLWLNISPGKTPQQILPQLLKGVHYHDLQFVSQGVKSPQESTQKDLDLIEVTLGLPDRCHRHRPDWVKVGINGRIVRSPPVEQAILVAFSRTLPKDRFPVCFIHLTLCPSQIDWNRHPAKVEIYLHSLDFWQEQVSKLIEQGLRLSPQTLASAAQNQRVGKLLKASEEKASYRVDAKDHQTDANAVGLMPLKAVAQVRNTYIMAEHSTGLWLIEQHIAHERVLYETLQDNWQLIPLETPIILTKLSDNQVEQLARIGLEIEVFGEQLWAVRTVPKLLSTREDCPEALVELSIGGDLQTAQVAVACRSAIRNGTPMTLSQMQELLDQWKTTRNPATCPHGRPIYLSLEESSLSRFFRRHWVIGKSHGI.

The protein belongs to the DNA mismatch repair MutL/HexB family.

Its function is as follows. This protein is involved in the repair of mismatches in DNA. It is required for dam-dependent methyl-directed DNA mismatch repair. May act as a 'molecular matchmaker', a protein that promotes the formation of a stable complex between two or more DNA-binding proteins in an ATP-dependent manner without itself being part of a final effector complex. The chain is DNA mismatch repair protein MutL from Rippkaea orientalis (strain PCC 8801 / RF-1) (Cyanothece sp. (strain PCC 8801)).